The sequence spans 409 residues: LL-diaminopimelate aminotransferase (409 aa).

Residues Tyr15 and Gly42 each coordinate substrate. Residues Tyr72, 108–109 (AK), Tyr132, Asn186, Tyr217, and 245–247 (SFS) contribute to the pyridoxal 5'-phosphate site. Positions 109, 132, and 186 each coordinate substrate. Lys248 bears the N6-(pyridoxal phosphate)lysine mark. Residues Arg256 and Asn291 each coordinate pyridoxal 5'-phosphate. Substrate contacts are provided by Asn291 and Arg385.

It belongs to the class-I pyridoxal-phosphate-dependent aminotransferase family. LL-diaminopimelate aminotransferase subfamily. In terms of assembly, homodimer. The cofactor is pyridoxal 5'-phosphate.

The enzyme catalyses (2S,6S)-2,6-diaminopimelate + 2-oxoglutarate = (S)-2,3,4,5-tetrahydrodipicolinate + L-glutamate + H2O + H(+). It functions in the pathway amino-acid biosynthesis; L-lysine biosynthesis via DAP pathway; LL-2,6-diaminopimelate from (S)-tetrahydrodipicolinate (aminotransferase route): step 1/1. Functionally, involved in the synthesis of meso-diaminopimelate (m-DAP or DL-DAP), required for both lysine and peptidoglycan biosynthesis. Catalyzes the direct conversion of tetrahydrodipicolinate to LL-diaminopimelate. This Desulfosudis oleivorans (strain DSM 6200 / JCM 39069 / Hxd3) (Desulfococcus oleovorans) protein is LL-diaminopimelate aminotransferase.